The sequence spans 437 residues: ATP-dependent protease ATPase subunit HslU (437 aa).

ATP is bound by residues Val18, 60 to 65 (GCGKTE), Asp250, Glu315, and Arg387.

It belongs to the ClpX chaperone family. HslU subfamily. In terms of assembly, a double ring-shaped homohexamer of HslV is capped on each side by a ring-shaped HslU homohexamer. The assembly of the HslU/HslV complex is dependent on binding of ATP.

Its subcellular location is the cytoplasm. Functionally, ATPase subunit of a proteasome-like degradation complex; this subunit has chaperone activity. The binding of ATP and its subsequent hydrolysis by HslU are essential for unfolding of protein substrates subsequently hydrolyzed by HslV. HslU recognizes the N-terminal part of its protein substrates and unfolds these before they are guided to HslV for hydrolysis. In Methylobacterium nodulans (strain LMG 21967 / CNCM I-2342 / ORS 2060), this protein is ATP-dependent protease ATPase subunit HslU.